The chain runs to 195 residues: Interferon tau-8 (195 aa).

Residues 1–23 (MAFVLSLLMALVLVSYGPGGSLG) form the signal peptide. Disulfide bonds link Cys-24–Cys-122 and Cys-52–Cys-162.

The protein belongs to the alpha/beta interferon family. IFN-alphaII subfamily. Constitutively and exclusively expressed in the mononuclear cells of the extraembryonic trophectoderm.

It is found in the secreted. In terms of biological role, paracrine hormone primarily responsible for maternal recognition of pregnancy. Interacts with endometrial receptors, probably type I interferon receptors, and blocks estrogen receptor expression, preventing the estrogen-induced increase in oxytocin receptor expression in the endometrium. This results in the suppression of the pulsatile endometrial release of the luteolytic hormone prostaglandin F2-alpha, hindering the regression of the corpus luteum (luteolysis) and therefore a return to ovarian cyclicity. This, and a possible direct effect of IFN-tau on prostaglandin synthesis, leads in turn to continued ovarian progesterone secretion, which stimulates the secretion by the endometrium of the nutrients required for the growth of the conceptus. In summary, displays particularly high antiviral and antiproliferative potency concurrently with particular weak cytotoxicity, high antiluteolytic activity and immunomodulatory properties. In contrast with other IFNs, IFN-tau is not virally inducible. This Ovis aries (Sheep) protein is Interferon tau-8 (IFNT8).